A 457-amino-acid polypeptide reads, in one-letter code: UDP-N-acetylmuramate--L-alanine ligase (457 aa).

Residue 109 to 115 coordinates ATP; that stretch reads GTDGKTT.

The protein belongs to the MurCDEF family.

The protein resides in the cytoplasm. The catalysed reaction is UDP-N-acetyl-alpha-D-muramate + L-alanine + ATP = UDP-N-acetyl-alpha-D-muramoyl-L-alanine + ADP + phosphate + H(+). It participates in cell wall biogenesis; peptidoglycan biosynthesis. Cell wall formation. The sequence is that of UDP-N-acetylmuramate--L-alanine ligase from Thermotoga sp. (strain RQ2).